A 361-amino-acid polypeptide reads, in one-letter code: Histidinol-phosphate aminotransferase (361 aa).

Lysine 219 bears the N6-(pyridoxal phosphate)lysine mark.

It belongs to the class-II pyridoxal-phosphate-dependent aminotransferase family. Histidinol-phosphate aminotransferase subfamily. Homodimer. The cofactor is pyridoxal 5'-phosphate.

It carries out the reaction L-histidinol phosphate + 2-oxoglutarate = 3-(imidazol-4-yl)-2-oxopropyl phosphate + L-glutamate. It functions in the pathway amino-acid biosynthesis; L-histidine biosynthesis; L-histidine from 5-phospho-alpha-D-ribose 1-diphosphate: step 7/9. The sequence is that of Histidinol-phosphate aminotransferase from Cereibacter sphaeroides (strain ATCC 17029 / ATH 2.4.9) (Rhodobacter sphaeroides).